The chain runs to 307 residues: Protein YIF1A (307 aa).

Residues 1-42 (MNFQQQGYRATKPRARASPPTGGPMLFDDTSSGPPPMNNQNY) form a disordered region. Topologically, residues 1–148 (MNFQQQGYRA…TPRHDVNAPD (148 aa)) are cytoplasmic. Residues 149 to 169 (LYIPTMAFITYILLAGMALGI) form a helical membrane-spanning segment. The Lumenal portion of the chain corresponds to 170–184 (QKRFSPEVLGLCAST). Residues 185–205 (ALVWMIIEVLVMLLSLYLLTV) form a helical membrane-spanning segment. Residues 206 to 213 (HTDLSTFD) lie on the Cytoplasmic side of the membrane. The helical transmembrane segment at 214–236 (LVAYSGYKYVGMILTVFCGLLFG) threads the bilayer. The Lumenal segment spans residues 237–239 (SDG). A helical membrane pass occupies residues 240–259 (YYVALAWSSCALMFFIVRSL). At 260 to 285 (KMKILSSISADSMGAGASAKPRFRLY) the chain is on the cytoplasmic side. The helical transmembrane segment at 286-306 (ITVASAAFQPFIIYWLTAHLV) threads the bilayer.

The protein belongs to the YIF1 family.

The protein resides in the endoplasmic reticulum membrane. It is found in the golgi apparatus membrane. It localises to the endoplasmic reticulum-Golgi intermediate compartment membrane. Its function is as follows. Possible role in transport between endoplasmic reticulum and Golgi. In Danio rerio (Zebrafish), this protein is Protein YIF1A (yif1a).